The chain runs to 1551 residues: UDP-glucose:glycoprotein glucosyltransferase 1 (1551 aa).

Positions 1 to 42 (MCSRGDANAAGAAAARRVTGLCYNMGLLIALALLCLFSLAEA) are cleaved as a signal peptide. Residues N269, N536, N1015, and N1228 are each glycosylated (N-linked (GlcNAc...) asparagine). Positions 1244–1551 (KTEEVKQDKD…QEGSQKHEEL (308 aa)) are glucosyltransferase. A Phosphoserine modification is found at S1277. The disordered stretch occupies residues 1531-1551 (KELGTLHEEETQEGSQKHEEL). The Prevents secretion from ER signature appears at 1548–1551 (HEEL).

Belongs to the glycosyltransferase 8 family. As to quaternary structure, monomer as well as in a tight complex with SELENOF. Interacts with METTL23. Part of a large chaperone multiprotein complex comprising DNAJB11, HSP90B1, HSPA5, HYOU, PDIA2, PDIA4, PDIA6, PPIB, SDF2L1, UGGT1 and very small amounts of ERP29, but not, or at very low levels, CALR nor CANX. Ca(2+) serves as cofactor.

The protein resides in the endoplasmic reticulum lumen. Its subcellular location is the endoplasmic reticulum-Golgi intermediate compartment. It catalyses the reaction N(4)-(alpha-D-Man-(1-&gt;2)-alpha-D-Man-(1-&gt;2)-alpha-D-Man-(1-&gt;3)-[alpha-D-Man-(1-&gt;2)-alpha-D-Man-(1-&gt;3)-[alpha-D-Man-(1-&gt;2)-alpha-D-Man-(1-&gt;6)]-alpha-D-Man-(1-&gt;6)]-beta-D-Man-(1-&gt;4)-beta-D-GlcNAc-(1-&gt;4)-beta-D-GlcNAc)-L-asparaginyl-[protein] (N-glucan mannose isomer 9A1,2,3B1,2,3) + UDP-alpha-D-glucose = N(4)-(alpha-D-Glc-(1-&gt;3)-alpha-D-Man-(1-&gt;2)-alpha-D-Man-(1-&gt;2)-alpha-D-Man-(1-&gt;3)-[alpha-D-Man-(1-&gt;2)-alpha-D-Man-(1-&gt;3)-[alpha-D-Man-(1-&gt;2)-alpha-D-Man-(1-&gt;6)]-alpha-D-Man-(1-&gt;6)]-beta-D-Man-(1-&gt;4)-beta-D-GlcNAc-(1-&gt;4)-beta-D-GlcNAc)-L-asparaginyl-[protein] + UDP + H(+). Its pathway is protein modification; protein glycosylation. Its function is as follows. Recognizes glycoproteins with minor folding defects. Reglucosylates single N-glycans near the misfolded part of the protein, thus providing quality control for protein folding in the endoplasmic reticulum. Reglucosylated proteins are recognized by calreticulin for recycling to the endoplasmic reticulum and refolding or degradation. The chain is UDP-glucose:glycoprotein glucosyltransferase 1 (Uggt1) from Rattus norvegicus (Rat).